Consider the following 312-residue polypeptide: Ribonuclease Z (312 aa).

Residues H63, H65, D67, H68, H141, D212, and H270 each coordinate Zn(2+). D67 functions as the Proton acceptor in the catalytic mechanism.

Belongs to the RNase Z family. In terms of assembly, homodimer. The cofactor is Zn(2+).

It carries out the reaction Endonucleolytic cleavage of RNA, removing extra 3' nucleotides from tRNA precursor, generating 3' termini of tRNAs. A 3'-hydroxy group is left at the tRNA terminus and a 5'-phosphoryl group is left at the trailer molecule.. Functionally, zinc phosphodiesterase, which displays some tRNA 3'-processing endonuclease activity. Probably involved in tRNA maturation, by removing a 3'-trailer from precursor tRNA. The polypeptide is Ribonuclease Z (Lactobacillus helveticus (strain DPC 4571)).